A 585-amino-acid polypeptide reads, in one-letter code: Vacuolar protein 8 (585 aa).

G2 carries the N-myristoyl glycine lipid modification. Residues C4, C5, and C7 are each lipidated (S-palmitoyl cysteine). 9 ARM repeats span residues 39–76, 77–116, 118–157, 159–198, 200–239, 243–282, 284–323, 325–365, and 409–448; these read NRSD…FAEI, TEKD…NLAV, TENK…NLAT, DDNK…NMTH, GENR…NIAV, NRKK…NLAS, SGYQ…NISI, PLNE…NLAA, and DDLK…NLCS. Residues 531 to 562 show a composition bias toward low complexity; the sequence is QIGQTTTTTTTNITNNNTNTNTNTNTTTSTSN. The segment at 531-565 is disordered; sequence QIGQTTTTTTTNITNNNTNTNTNTNTTTSTSNEDQ.

The protein belongs to the beta-catenin family.

It is found in the vacuole membrane. Functions in both vacuole inheritance and protein targeting from the cytoplasm to vacuole. Vacuole inheritance has a role in the regulation of hyphal cell division. This is Vacuolar protein 8 (VAC8) from Candida albicans (strain SC5314 / ATCC MYA-2876) (Yeast).